The following is a 568-amino-acid chain: Estrogen receptor beta (568 aa).

The modulating stretch occupies residues 1–177 (MHQQSPVDDV…SLRGKADMHY (177 aa)). NR C4-type zinc fingers lie at residues 178–198 (CAVCSDYASGYHYGVWSCEGC) and 214–238 (CPATNQCTIDKNRRKSCQACRLRKC). Positions 178–243 (CAVCSDYASG…RLRKCYEVGM (66 aa)) form a DNA-binding region, nuclear receptor. Residues 300 to 536 (TPEELIARIM…DLLLEMLDAH (237 aa)) enclose the NR LBD domain.

It belongs to the nuclear hormone receptor family. NR3 subfamily. Binds DNA as a homodimer. Can form a heterodimer with ER-alpha.

It localises to the nucleus. Its function is as follows. Binds estrogens with an affinity similar to that of ER-alpha, and activates expression of reporter genes containing estrogen response elements (ERE) in an estrogen-dependent manner. The polypeptide is Estrogen receptor beta (esr2) (Oncorhynchus mykiss (Rainbow trout)).